We begin with the raw amino-acid sequence, 357 residues long: Alanine racemase (357 aa).

Lysine 33 acts as the Proton acceptor; specific for D-alanine in catalysis. Lysine 33 bears the N6-(pyridoxal phosphate)lysine mark. Position 129 (arginine 129) interacts with substrate. Catalysis depends on tyrosine 253, which acts as the Proton acceptor; specific for L-alanine. Methionine 301 lines the substrate pocket.

It belongs to the alanine racemase family. Pyridoxal 5'-phosphate is required as a cofactor.

The catalysed reaction is L-alanine = D-alanine. The protein operates within amino-acid biosynthesis; D-alanine biosynthesis; D-alanine from L-alanine: step 1/1. In terms of biological role, catalyzes the interconversion of L-alanine and D-alanine. May also act on other amino acids. This chain is Alanine racemase (alr), found in Pseudomonas savastanoi pv. phaseolicola (strain 1448A / Race 6) (Pseudomonas syringae pv. phaseolicola (strain 1448A / Race 6)).